Here is a 490-residue protein sequence, read N- to C-terminus: Acetyl-coenzyme A carboxylase carboxyl transferase subunit beta, chloroplastic (490 aa).

The 270-residue stretch at 221-490 folds into the CoA carboxyltransferase N-terminal domain; that stretch reads LWVQCENCYG…PLNQKSSKIK (270 aa). Zn(2+) contacts are provided by Cys225, Cys228, Cys244, and Cys247. The C4-type zinc finger occupies 225–247; it reads CENCYGLNYKKFLKSKMNICEQC.

It belongs to the AccD/PCCB family. In terms of assembly, acetyl-CoA carboxylase is a heterohexamer composed of biotin carboxyl carrier protein, biotin carboxylase and 2 subunits each of ACCase subunit alpha and ACCase plastid-coded subunit beta (accD). Requires Zn(2+) as cofactor. In terms of tissue distribution, expressed in leaves, ripening and mature fruit.

It localises to the plastid. Its subcellular location is the chloroplast stroma. The protein localises to the chromoplast stroma. It catalyses the reaction N(6)-carboxybiotinyl-L-lysyl-[protein] + acetyl-CoA = N(6)-biotinyl-L-lysyl-[protein] + malonyl-CoA. It participates in lipid metabolism; malonyl-CoA biosynthesis; malonyl-CoA from acetyl-CoA: step 1/1. Component of the acetyl coenzyme A carboxylase (ACC) complex. Biotin carboxylase (BC) catalyzes the carboxylation of biotin on its carrier protein (BCCP) and then the CO(2) group is transferred by the transcarboxylase to acetyl-CoA to form malonyl-CoA. Is up-regulated upon chromoplast differentiation, presumably for fatty acid biosynthesis. The protein is Acetyl-coenzyme A carboxylase carboxyl transferase subunit beta, chloroplastic of Solanum lycopersicum (Tomato).